A 154-amino-acid polypeptide reads, in one-letter code: Myoglobin (154 aa).

A Globin domain is found at 2-148; it reads GLSDGEWQSV…FRNDIAAKYK (147 aa). Position 4 is a phosphoserine (Ser4). His65 contributes to the nitrite binding site. An O2-binding site is contributed by His65. A Phosphothreonine modification is found at Thr68. A heme b-binding site is contributed by His94.

It belongs to the globin family. As to quaternary structure, monomeric.

It is found in the cytoplasm. It localises to the sarcoplasm. It catalyses the reaction Fe(III)-heme b-[protein] + nitric oxide + H2O = Fe(II)-heme b-[protein] + nitrite + 2 H(+). The enzyme catalyses H2O2 + AH2 = A + 2 H2O. In terms of biological role, monomeric heme protein which primary function is to store oxygen and facilitate its diffusion within muscle tissues. Reversibly binds oxygen through a pentacoordinated heme iron and enables its timely and efficient release as needed during periods of heightened demand. Depending on the oxidative conditions of tissues and cells, and in addition to its ability to bind oxygen, it also has a nitrite reductase activity whereby it regulates the production of bioactive nitric oxide. Under stress conditions, like hypoxia and anoxia, it also protects cells against reactive oxygen species thanks to its pseudoperoxidase activity. This Perodicticus potto edwarsi (Potto) protein is Myoglobin (MB).